The primary structure comprises 624 residues: Chaperone protein HtpG (624 aa).

The interval 1–336 is a; substrate-binding; the sequence is MKGQETRGFQ…SSDLSLNVSR (336 aa). Residues 337-552 are b; the sequence is EILQDSTVTR…ADEMSTQMAK (216 aa). The tract at residues 553–624 is c; sequence LFAAAGQKVP…IRRMNQLLVS (72 aa).

It belongs to the heat shock protein 90 family. Homodimer.

It is found in the cytoplasm. Its function is as follows. Molecular chaperone. Has ATPase activity. The sequence is that of Chaperone protein HtpG from Shigella dysenteriae serotype 1 (strain Sd197).